Consider the following 397-residue polypeptide: N-acetyllactosaminide beta-1,3-N-acetylglucosaminyltransferase 2 (397 aa).

Over 1-7 (MSVGRRR) the chain is Cytoplasmic. A helical; Signal-anchor for type II membrane protein membrane pass occupies residues 8-28 (VKLLGILMMANVFIYLIVEVS). Residues 29 to 325 (KNSSQDKNGK…ALRLYSATSR (297 aa)) are Lumenal-facing. Residues Asn-30, Asn-79, Asn-89, Asn-127, Asn-173, and Asn-219 are each glycosylated (N-linked (GlcNAc...) asparagine).

This sequence belongs to the glycosyltransferase 31 family. As to quaternary structure, interacts with B3GNT8; this interaction greatly increases B3GNT2 catalytic activity, independently of B3GNT8 enzymatic activity. Mn(2+) is required as a cofactor. As to expression, expressed in heart, brain, lung, kidney and testis and, to a lesser extent, in liver and skeletal muscle. No expression in spleen.

It localises to the golgi apparatus membrane. It carries out the reaction a beta-D-galactosyl-(1-&gt;4)-N-acetyl-beta-D-glucosaminyl derivative + UDP-N-acetyl-alpha-D-glucosamine = an N-acetyl-beta-D-glucosaminyl-(1-&gt;3)-beta-D-galactosyl-(1-&gt;4)-N-acetyl-beta-D-glucosaminyl derivative + UDP + H(+). Its pathway is protein modification; protein glycosylation. Its function is as follows. Beta-1,3-N-acetylglucosaminyltransferase involved in the synthesis of poly-N-acetyllactosamine. Catalyzes the initiation and elongation of poly-N-acetyllactosamine chains. Probably constitutes the main polylactosamine synthase. The protein is N-acetyllactosaminide beta-1,3-N-acetylglucosaminyltransferase 2 (B3GNT2) of Mus musculus (Mouse).